The primary structure comprises 223 residues: Adenylate kinase 4, mitochondrial (223 aa).

Residue 15–20 coordinates a ribonucleoside 5'-triphosphate; it reads GSGKGT. Residues 35–64 are NMP; sequence SSGHLLRENLKTGTEVGDVAKQYLEKGLLV. Residues S36 and R41 each coordinate AMP. K60 is subject to N6-succinyllysine. AMP is bound by residues 62 to 64, 89 to 92, and Q96; these read LLV and GFPR. Residues 125-162 form an LID region; it reads RRWIHPSSGRVYNLDFNPPQVQGIDDITGEPLVQQEDD. A ribonucleoside 5'-triphosphate-binding positions include R126 and 135–136; that span reads VY. R170 contributes to the AMP binding site. K175 carries the N6-acetyllysine modification. Residues K179 and K186 each carry the N6-acetyllysine; alternate modification. N6-succinyllysine; alternate occurs at positions 179 and 186. A ribonucleoside 5'-triphosphate is bound at residue T199.

Belongs to the adenylate kinase family. AK3 subfamily. In terms of assembly, monomer. Interacts with SLC25A5/ANT2. As to expression, expressed in kidney, liver, stomach, brain, spinal cord, heart, ovary, oviduct, colon, jejunum, ileum and testis (at protein level). In the brain, expressed in the pyramidal cells of the cerebrum and glial cells in the cerebellum (at protein level). In the heart, expressed by myocytes (at protein level). In the kidney, expressed in the proximal to distal tubule in the cortex and the outer and inner zones of the medulla (at protein level). In the stomach, expressed in stratified squamous epithelia in the forestomach and in the gastric pit and mucus producing cells of the glandular stomach (at protein level). Expressed in epithelial cells of the jejunum, ileum, and colon (at protein level). In the testis, expressed by spermatocytes (at protein level). In the ovaries, expressed by oocytes, follicular epithelial cells, and corpus luteum cells (at protein level). In the oviduct, expressed in the epithelia of the isthmus and the ciliated cells of the ampulla (at protein level). Expressed in the pyramidal cells in the hippocampus.

Its subcellular location is the mitochondrion matrix. The enzyme catalyses a ribonucleoside 5'-phosphate + ATP = a ribonucleoside 5'-diphosphate + ADP. It carries out the reaction AMP + ATP = 2 ADP. It catalyses the reaction GTP + AMP = GDP + ADP. The catalysed reaction is CMP + ATP = CDP + ADP. The enzyme catalyses GTP + CMP = CDP + GDP. It carries out the reaction dAMP + ATP = dADP + ADP. It catalyses the reaction dCMP + ATP = dCDP + ADP. The catalysed reaction is a 2'-deoxyribonucleoside 5'-diphosphate + ATP = a 2'-deoxyribonucleoside 5'-triphosphate + ADP. The enzyme catalyses a ribonucleoside 5'-diphosphate + ATP = a ribonucleoside 5'-triphosphate + ADP. It carries out the reaction GDP + ATP = GTP + ADP. It catalyses the reaction CDP + GTP = CTP + GDP. The catalysed reaction is CDP + ATP = CTP + ADP. The enzyme catalyses UDP + ATP = UTP + ADP. It carries out the reaction GTP + UDP = UTP + GDP. It catalyses the reaction dADP + GTP = dATP + GDP. The catalysed reaction is dCDP + GTP = dCTP + GDP. The enzyme catalyses dCDP + ATP = dCTP + ADP. It carries out the reaction dGDP + ATP = dGTP + ADP. It catalyses the reaction dTDP + GTP = dTTP + GDP. The catalysed reaction is dTDP + ATP = dTTP + ADP. In terms of biological role, broad-specificity mitochondrial nucleoside phosphate kinase involved in cellular nucleotide homeostasis by catalyzing nucleoside-phosphate interconversions. Similar to other adenylate kinases, preferentially catalyzes the phosphorylation of the nucleoside monophosphate AMP with ATP as phosphate donor to produce ADP. Phosphorylates only AMP when using GTP as phosphate donor. In vitro, can also catalyze the phosphorylation of CMP, dAMP and dCMP and use GTP as an alternate phosphate donor. Moreover, exhibits a diphosphate kinase activity, producing ATP, CTP, GTP, UTP, TTP, dATP, dCTP and dGTP from the corresponding diphosphate substrates with either ATP or GTP as phosphate donors. Plays a role in controlling cellular ATP levels by regulating phosphorylation and activation of the energy sensor protein kinase AMPK. Plays a protective role in the cellular response to oxidative stress. In Mus musculus (Mouse), this protein is Adenylate kinase 4, mitochondrial.